The following is a 119-amino-acid chain: MTRVPRGYIARRRRTKMRSFASNFRGAHLRLNRMITQQVKRAFVSSHRDRGRQKRDFRRLWITRINAATRIYKVFDSYSKLIHNLYKKKLILNRKMLAQVAVSNPNNLYTISNKIKIIN.

It belongs to the bacterial ribosomal protein bL20 family.

It is found in the plastid. The protein localises to the chloroplast. Its function is as follows. Binds directly to 23S ribosomal RNA and is necessary for the in vitro assembly process of the 50S ribosomal subunit. It is not involved in the protein synthesizing functions of that subunit. This is Large ribosomal subunit protein bL20c from Lolium perenne (Perennial ryegrass).